A 39-amino-acid polypeptide reads, in one-letter code: Larval cuticle protein SC6 (39 aa).

A Chitin-binding type R&amp;R domain is found at Val-15–Asp-39.

Component of the cuticle of the larva of flesh fly. The sequence is that of Larval cuticle protein SC6 from Sarcophaga bullata (Grey flesh fly).